Reading from the N-terminus, the 193-residue chain is Probable DNA-directed RNA polymerase subunit delta (193 aa).

Residues 14 to 83 (LSMIEVARAI…GDNKWGLRSW (70 aa)) form the HTH HARE-type domain. Composition is skewed to acidic residues over residues 119 to 133 (EDAIDYNDDDPEDEN) and 143 to 193 (YDND…ETND). Residues 119 to 193 (EDAIDYNDDD…DDDYEDETND (75 aa)) are disordered.

Belongs to the RpoE family. RNAP is composed of a core of 2 alpha, a beta and a beta' subunits. The core is associated with a delta subunit and one of several sigma factors.

Its function is as follows. Participates in both the initiation and recycling phases of transcription. In the presence of the delta subunit, RNAP displays an increased specificity of transcription, a decreased affinity for nucleic acids, and an increased efficiency of RNA synthesis because of enhanced recycling. In Streptococcus thermophilus (strain CNRZ 1066), this protein is Probable DNA-directed RNA polymerase subunit delta.